The sequence spans 171 residues: Phosphopantetheine adenylyltransferase (171 aa).

Thr10 is a substrate binding site. ATP is bound by residues 10–11 (TF) and His18. 3 residues coordinate substrate: Lys42, Thr74, and Arg88. Residues 89–91 (GLR), Glu99, and 124–130 (WACLSSK) contribute to the ATP site.

Belongs to the bacterial CoaD family. In terms of assembly, homohexamer. It depends on Mg(2+) as a cofactor.

The protein resides in the cytoplasm. The enzyme catalyses (R)-4'-phosphopantetheine + ATP + H(+) = 3'-dephospho-CoA + diphosphate. Its pathway is cofactor biosynthesis; coenzyme A biosynthesis; CoA from (R)-pantothenate: step 4/5. In terms of biological role, reversibly transfers an adenylyl group from ATP to 4'-phosphopantetheine, yielding dephospho-CoA (dPCoA) and pyrophosphate. The polypeptide is Phosphopantetheine adenylyltransferase (Blochmanniella pennsylvanica (strain BPEN)).